The sequence spans 244 residues: MDLRLAGRRALVTGAGKGIGRSIVKALHAAGARVVAVSRTQADLDSLVRECPGVETVCVDLADWEATEQALGGVGPVDLLVNNAAVAFLQPFLEVTKEAYDMSFSVNLRAVIQVSQIVARGLIARGAPGVIVNVSSQASQRGLTNHSVYCSTKGALDTLTKVMAVELGPHKIRVNAVNPTVVMTPMGQAAWSDPQKAKAMLDRIPLGRFAEVENVVDTILFLLSDRSSMTTGSTVPVDGGFLAT.

Met1 bears the N-acetylmethionine mark. Residue 11 to 39 (LVTGAGKGIGRSIVKALHAAGARVVAVSR) coordinates NADP(+). An Omega-N-methylarginine modification is found at Arg21. The residue at position 46 (Ser46) is a Phosphoserine. Position 136 (Ser136) interacts with substrate. Catalysis depends on Tyr149, which acts as the Proton acceptor. Lys153 is a catalytic residue.

This sequence belongs to the short-chain dehydrogenases/reductases (SDR) family. In terms of assembly, homotetramer.

Its subcellular location is the membrane. The enzyme catalyses xylitol + NADP(+) = L-xylulose + NADPH + H(+). Catalyzes the NADPH-dependent reduction of several pentoses, tetroses, trioses, alpha-dicarbonyl compounds and L-xylulose. Participates in the uronate cycle of glucose metabolism. May play a role in the water absorption and cellular osmoregulation in the proximal renal tubules by producing xylitol, an osmolyte, thereby preventing osmolytic stress from occurring in the renal tubules. In Bos taurus (Bovine), this protein is L-xylulose reductase (DCXR).